A 66-amino-acid chain; its full sequence is Conotoxin Bu1.4 (66 aa).

Positions 1-23 are cleaved as a signal peptide; the sequence is MGMRMRMMFTVFLLVVLANTVVS. A propeptide spanning residues 24–46 is cleaved from the precursor; the sequence is FPSDRDSDGADAEASDEPVEFER. The tract at residues 25–48 is disordered; sequence PSDRDSDGADAEASDEPVEFERDE. Positions 32-42 are enriched in acidic residues; the sequence is GADAEASDEPV. Intrachain disulfides connect Cys51–Cys57 and Cys52–Cys62. At Thr63 the chain carries Threonine amide.

This sequence belongs to the conotoxin A superfamily. As to expression, expressed by the venom duct.

It localises to the secreted. The sequence is that of Conotoxin Bu1.4 from Conus bullatus (Bubble cone).